The sequence spans 551 residues: Histone-lysine N-methyltransferase SETDB2 (551 aa).

An MBD domain is found at 146 to 210 (LLGHNPLRAP…DRFSFSTQVC (65 aa)). One can recognise a Pre-SET domain in the interval 269–329 (VCCDCTDGCT…RCENRVVQKG (61 aa)). Residues cysteine 271, cysteine 273, cysteine 277, cysteine 283, cysteine 285, cysteine 310, cysteine 314, cysteine 316, and cysteine 321 each contribute to the Zn(2+) site. An SET domain is found at 332-537 (VRLQVFRTPE…AGTELTWSCT (206 aa)). Residue 342 to 344 (HMW) coordinates S-adenosyl-L-methionine. Residues 426–447 (SLAQRRDQQQFSISSETEDNRC) are disordered. S-adenosyl-L-methionine is bound by residues arginine 491 and 494–495 (TH).

It belongs to the class V-like SAM-binding methyltransferase superfamily.

It is found in the nucleus. Its subcellular location is the chromosome. It catalyses the reaction N(6),N(6)-dimethyl-L-lysyl(9)-[histone H3] + S-adenosyl-L-methionine = N(6),N(6),N(6)-trimethyl-L-lysyl(9)-[histone H3] + S-adenosyl-L-homocysteine + H(+). In terms of biological role, histone methyltransferase involved in left-right axis specification in early development and mitosis. Specifically trimethylates 'Lys-9' of histone H3 (H3K9me3). H3K9me3 represents a specific tag for epigenetic transcriptional repression by recruiting HP1 (CBX1, CBX3 and/or CBX5) proteins to methylated histones. Contributes to H3K9me3 in both the interspersed repetitive elements and centromere-associated repeats. Plays a role in chromosome condensation and segregation during mitosis. During early development, required to specify the left-right axis by repressing expression of FGF8, leading to negatively regulate the dorsal organizer formation. The protein is Histone-lysine N-methyltransferase SETDB2 (setdb2) of Danio rerio (Zebrafish).